The sequence spans 154 residues: Crossover junction endodeoxyribonuclease RuvC (154 aa).

Catalysis depends on residues Asp-7, Glu-67, and Asp-139. The Mg(2+) site is built by Asp-7, Glu-67, and Asp-139.

Belongs to the RuvC family. In terms of assembly, homodimer which binds Holliday junction (HJ) DNA. The HJ becomes 2-fold symmetrical on binding to RuvC with unstacked arms; it has a different conformation from HJ DNA in complex with RuvA. In the full resolvosome a probable DNA-RuvA(4)-RuvB(12)-RuvC(2) complex forms which resolves the HJ. The cofactor is Mg(2+).

The protein localises to the cytoplasm. The enzyme catalyses Endonucleolytic cleavage at a junction such as a reciprocal single-stranded crossover between two homologous DNA duplexes (Holliday junction).. The RuvA-RuvB-RuvC complex processes Holliday junction (HJ) DNA during genetic recombination and DNA repair. Endonuclease that resolves HJ intermediates. Cleaves cruciform DNA by making single-stranded nicks across the HJ at symmetrical positions within the homologous arms, yielding a 5'-phosphate and a 3'-hydroxyl group; requires a central core of homology in the junction. The consensus cleavage sequence is 5'-(A/T)TT(C/G)-3'. Cleavage occurs on the 3'-side of the TT dinucleotide at the point of strand exchange. HJ branch migration catalyzed by RuvA-RuvB allows RuvC to scan DNA until it finds its consensus sequence, where it cleaves and resolves the cruciform DNA. The sequence is that of Crossover junction endodeoxyribonuclease RuvC from Prochlorococcus marinus (strain MIT 9303).